We begin with the raw amino-acid sequence, 157 residues long: MIRLVTLAALPVLVLCQFDPSKWFMGSNLGGLQGFGALPARCLKYLEPGLSRGNRPPSHRFFFNSTSGNCEQFVYYGRGGNRNNFRDVFKCMKSCGCKQQRNGGVPCNPPSQPVIRYYYDTFTKLCNTFQHTGCGGNSNHFKEWNDCFFTCGSGFEW.

Positions 1-16 (MIRLVTLAALPVLVLC) are cleaved as a signal peptide. 2 BPTI/Kunitz inhibitor domains span residues 42 to 95 (CLKY…MKSC) and 97 to 151 (CKQQ…FFTC). 5 cysteine pairs are disulfide-bonded: Cys42–Cys95, Cys70–Cys91, Cys97–Cys151, Cys107–Cys134, and Cys126–Cys147.

Nacreous layer of shell (at protein level).

It localises to the secreted. This Margaritifera margaritifera (Freshwater pearl mussel) protein is BPTI/Kunitz domain-containing protein 3.